We begin with the raw amino-acid sequence, 402 residues long: MIVVEKVDKTPVAKRLVEIVERKGQGHPDYIADGISEWVSRYLSRYYLERFGVILHHNVDKTLVVGGQASPRFGGGEVLQPIYILVSGRATSEVRLKDGVVKIPLGPIIIQAARDWIKQHFRYLDPDAHTVIDYKIGQGSADLVGIYDLGVKSVPLANDTSVGVGYAPLTPLEQLVYKTERLLNSRDFKAKYPEVGEDVKVMGVRVGNEVKLTVAAAMISRLVKDKSHYLSVKDDVKKAVEDLASKVAPDYKIDVTINAADKPEHGIFYLTVTGTSAEHGDDGMTGRGNRANGLITPMRSMSLEAAAGKNPVSHVGKIYNVVAQRIADRIYAEAKDIVEVYVEIVSQIGKPINEPKILNIEIIKEGALTGEVKNEAEAIAREELEKITRVTEYILRGEVSLY.

137–142 (GQGSAD) is an ATP binding site.

The protein belongs to the AdoMet synthase 2 family. Mg(2+) serves as cofactor.

It catalyses the reaction L-methionine + ATP + H2O = S-adenosyl-L-methionine + phosphate + diphosphate. It functions in the pathway amino-acid biosynthesis; S-adenosyl-L-methionine biosynthesis; S-adenosyl-L-methionine from L-methionine: step 1/1. Its function is as follows. Catalyzes the formation of S-adenosylmethionine from methionine and ATP. This Pyrobaculum neutrophilum (strain DSM 2338 / JCM 9278 / NBRC 100436 / V24Sta) (Thermoproteus neutrophilus) protein is S-adenosylmethionine synthase.